A 136-amino-acid polypeptide reads, in one-letter code: Ribonuclease P protein component (136 aa).

It belongs to the RnpA family. Consists of a catalytic RNA component (M1 or rnpB) and a protein subunit.

The enzyme catalyses Endonucleolytic cleavage of RNA, removing 5'-extranucleotides from tRNA precursor.. RNaseP catalyzes the removal of the 5'-leader sequence from pre-tRNA to produce the mature 5'-terminus. It can also cleave other RNA substrates such as 4.5S RNA. The protein component plays an auxiliary but essential role in vivo by binding to the 5'-leader sequence and broadening the substrate specificity of the ribozyme. This is Ribonuclease P protein component from Burkholderia pseudomallei (strain 1106a).